A 998-amino-acid polypeptide reads, in one-letter code: tRNA (34-2'-O)-methyltransferase regulator WDR6 (998 aa).

11 WD repeats span residues L148 to P185, A200 to T239, G250 to R291, Q294 to K333, N476 to Q515, M527 to R566, V567 to L608, R664 to R704, A779 to L821, D826 to Q865, and L868 to K911.

This sequence belongs to the WD repeat WDR6 family. Interacts with Trm7-34.

Its subcellular location is the cytoplasm. Its function is as follows. Together with methyltransferase Trm7-34, methylates the 2'-O-ribose of nucleotides at position 34 of the anticodon loop of substrate tRNAs. This is tRNA (34-2'-O)-methyltransferase regulator WDR6 from Drosophila melanogaster (Fruit fly).